The chain runs to 141 residues: Nucleoside diphosphate kinase (141 aa).

The ATP site is built by Lys-11, Phe-59, Arg-87, Thr-93, Arg-104, and Asn-114. The active-site Pros-phosphohistidine intermediate is His-117.

The protein belongs to the NDK family. As to quaternary structure, homotetramer. Mg(2+) is required as a cofactor.

The protein localises to the cytoplasm. The catalysed reaction is a 2'-deoxyribonucleoside 5'-diphosphate + ATP = a 2'-deoxyribonucleoside 5'-triphosphate + ADP. It carries out the reaction a ribonucleoside 5'-diphosphate + ATP = a ribonucleoside 5'-triphosphate + ADP. Major role in the synthesis of nucleoside triphosphates other than ATP. The ATP gamma phosphate is transferred to the NDP beta phosphate via a ping-pong mechanism, using a phosphorylated active-site intermediate. In Nitrosomonas eutropha (strain DSM 101675 / C91 / Nm57), this protein is Nucleoside diphosphate kinase.